A 509-amino-acid polypeptide reads, in one-letter code: Glycogen synthase 2 (509 aa).

Lysine 15 provides a ligand contact to ADP-alpha-D-glucose.

It belongs to the glycosyltransferase 1 family. Bacterial/plant glycogen synthase subfamily.

It catalyses the reaction [(1-&gt;4)-alpha-D-glucosyl](n) + ADP-alpha-D-glucose = [(1-&gt;4)-alpha-D-glucosyl](n+1) + ADP + H(+). It functions in the pathway glycan biosynthesis; glycogen biosynthesis. Synthesizes alpha-1,4-glucan chains using ADP-glucose. This is Glycogen synthase 2 (glgA2) from Agrobacterium fabrum (strain C58 / ATCC 33970) (Agrobacterium tumefaciens (strain C58)).